We begin with the raw amino-acid sequence, 119 residues long: Large ribosomal subunit protein uL22 (119 aa).

The protein belongs to the universal ribosomal protein uL22 family. As to quaternary structure, part of the 50S ribosomal subunit.

Its function is as follows. This protein binds specifically to 23S rRNA; its binding is stimulated by other ribosomal proteins, e.g. L4, L17, and L20. It is important during the early stages of 50S assembly. It makes multiple contacts with different domains of the 23S rRNA in the assembled 50S subunit and ribosome. The globular domain of the protein is located near the polypeptide exit tunnel on the outside of the subunit, while an extended beta-hairpin is found that lines the wall of the exit tunnel in the center of the 70S ribosome. This Rickettsia bellii (strain OSU 85-389) protein is Large ribosomal subunit protein uL22.